Consider the following 138-residue polypeptide: Large ribosomal subunit protein bL19 (138 aa).

This sequence belongs to the bacterial ribosomal protein bL19 family.

Functionally, this protein is located at the 30S-50S ribosomal subunit interface and may play a role in the structure and function of the aminoacyl-tRNA binding site. The sequence is that of Large ribosomal subunit protein bL19 from Leptospira interrogans serogroup Icterohaemorrhagiae serovar Lai (strain 56601).